The primary structure comprises 360 residues: Photosystem II protein D1 (360 aa).

A run of 3 helical transmembrane segments spans residues 29–46 (YIGW…AATA), 118–133 (HFLL…QWEL), and 142–156 (WICV…SATA). H118 contacts chlorophyll a. Y126 contributes to the pheophytin a binding site. [CaMn4O5] cluster contacts are provided by D170 and E189. The helical transmembrane segment at 197-218 (FHMLGVAGVFGGSLFSAMHGSL) threads the bilayer. H198 is a chlorophyll a binding site. A quinone-binding positions include H215 and 264–265 (SF). H215 lines the Fe cation pocket. H272 is a binding site for Fe cation. Residues 274–288 (FLAAWPVVGIWFTAL) traverse the membrane as a helical segment. Residues H332, E333, D342, and A344 each coordinate [CaMn4O5] cluster. A propeptide spanning residues 345-360 (AGEVAPVALTAPAING) is cleaved from the precursor.

The protein belongs to the reaction center PufL/M/PsbA/D family. PSII is composed of 1 copy each of membrane proteins PsbA, PsbB, PsbC, PsbD, PsbE, PsbF, PsbH, PsbI, PsbJ, PsbK, PsbL, PsbM, PsbT, PsbX, PsbY, PsbZ, Psb30/Ycf12, peripheral proteins PsbO, CyanoQ (PsbQ), PsbU, PsbV and a large number of cofactors. It forms dimeric complexes. Requires The D1/D2 heterodimer binds P680, chlorophylls that are the primary electron donor of PSII, and subsequent electron acceptors. It shares a non-heme iron and each subunit binds pheophytin, quinone, additional chlorophylls, carotenoids and lipids. D1 provides most of the ligands for the Mn4-Ca-O5 cluster of the oxygen-evolving complex (OEC). There is also a Cl(-1) ion associated with D1 and D2, which is required for oxygen evolution. The PSII complex binds additional chlorophylls, carotenoids and specific lipids. as cofactor. Post-translationally, tyr-161 forms a radical intermediate that is referred to as redox-active TyrZ, YZ or Y-Z. In terms of processing, C-terminally processed by CtpA; processing is essential to allow assembly of the oxygen-evolving complex and thus photosynthetic growth.

Its subcellular location is the cellular thylakoid membrane. The catalysed reaction is 2 a plastoquinone + 4 hnu + 2 H2O = 2 a plastoquinol + O2. Photosystem II (PSII) is a light-driven water:plastoquinone oxidoreductase that uses light energy to abstract electrons from H(2)O, generating O(2) and a proton gradient subsequently used for ATP formation. It consists of a core antenna complex that captures photons, and an electron transfer chain that converts photonic excitation into a charge separation. The D1/D2 (PsbA/PsbD) reaction center heterodimer binds P680, the primary electron donor of PSII as well as several subsequent electron acceptors. The protein is Photosystem II protein D1 of Microchaete diplosiphon (Fremyella diplosiphon).